The sequence spans 277 residues: Protein PTST, chloroplastic (277 aa).

The transit peptide at 1-44 directs the protein to the chloroplast; that stretch reads MGCVPRIEFGCSSQSLTLSWNLRAWNLCRLNTISHFQKLPYPLV. The stretch at 95–152 forms a coiled coil; the sequence is DTERSKLVKKLSEANQQNRFLKRQLKTQEHEITNIKTELALMELEVQALVKLAEEIAN.

As to quaternary structure, interacts with GBSS1.

It localises to the plastid. Its subcellular location is the chloroplast stroma. Its function is as follows. Involved in targeting GBSS1 to the starch granule. Was originally thought to be a carbohydrate-binding scaffold protein, but it has been shown that it is mainly found as a soluble protein and that interaction with GBSS1 is a pre-requisite for subsequent starch granule binding. Dissociation from starch as a function of pH, Mg(2+) concentration or redox state is not observed. Interacts primarily with amylopectin and is required for amylose synthesis. The chain is Protein PTST, chloroplastic from Arabidopsis thaliana (Mouse-ear cress).